The following is a 73-amino-acid chain: Putative antitoxin VapB38 (73 aa).

Probable antitoxin component of a type II toxin-antitoxin (TA) system. Its putative cognate toxin is VapC38. This Mycobacterium tuberculosis (strain ATCC 25618 / H37Rv) protein is Putative antitoxin VapB38 (vapB38).